We begin with the raw amino-acid sequence, 511 residues long: Glutamate/gamma-aminobutyrate antiporter (511 aa).

The Cytoplasmic portion of the chain corresponds to 1–13; the sequence is MATSVQTGKAKQL. Residues 14–36 traverse the membrane as a helical segment; the sequence is TLLGFFAITASMVMAVYEYPTFA. Residues 37–40 lie on the Periplasmic side of the membrane; sequence TSGF. Residues 41-64 form a helical membrane-spanning segment; sequence SLVFFLLLGGILWFIPVGLCAAEM. The Cytoplasmic segment spans residues 65–85; sequence ATVDGWEEGGVFAWVSNTLGP. A helical membrane pass occupies residues 86–112; that stretch reads RWGFAAISFGYLQIAIGFIPMLYFVLG. Residues 113 to 126 lie on the Periplasmic side of the membrane; that stretch reads ALSYILKWPALNED. The chain crosses the membrane as a helical span at residues 127–147; that stretch reads PITKTIAALIILWALALTQFG. Over 148–151 the chain is Cytoplasmic; the sequence is GTKY. Residues 152 to 180 traverse the membrane as a helical segment; that stretch reads TARIAKVGFFAGILLPAFILIALAAIYLH. At 181–201 the chain is on the periplasmic side; it reads SGAPVAIEMDSKTFFPDFSKV. A helical transmembrane segment spans residues 202 to 225; it reads GTLVVFVAFILSYMGVEASATHVN. At 226–229 the chain is on the cytoplasmic side; it reads EMSN. The chain crosses the membrane as a helical span at residues 230–259; it reads PGRDYPLAMLLLMVAAICLSSVGGLSIAMV. At 260 to 288 the chain is on the periplasmic side; the sequence is IPGNEINLSAGVMQTFTVLMSHVAPEIEW. The helical transmembrane segment at 289-322 threads the bilayer; sequence TVRVISALLLLGVLAEIASWIVGPSRGMYVTAQK. Topologically, residues 323-337 are cytoplasmic; that stretch reads NLLPAAFAKMNKNGV. A helical transmembrane segment spans residues 338-359; it reads PVTLVISQLVITSIALIILTNT. The Periplasmic segment spans residues 360-362; the sequence is GGG. A helical membrane pass occupies residues 363–396; the sequence is NNMSFLIALALTVVIYLCAYFMLFIGYIVLVLKH. Over 397–409 the chain is Cytoplasmic; that stretch reads PDLKRTFNIPGGK. The chain crosses the membrane as a helical span at residues 410-430; the sequence is GVKLVVAIVGLLTSIMAFIVS. Topologically, residues 431–443 are periplasmic; that stretch reads FLPPDNIQGDSTD. Residues 444 to 467 traverse the membrane as a helical segment; the sequence is MYVELLVVSFLVVLALPFILYAVH. Residues 468 to 511 lie on the Cytoplasmic side of the membrane; sequence DRKGKANTGVTLEPINSQNAPKGHFFLHPRARSPHYIVMNDKKH.

Belongs to the amino acid-polyamine-organocation (APC) superfamily. Glutamate:GABA antiporter (GGA) (TC 2.A.3.7) family. As to quaternary structure, monomer.

The protein localises to the cell inner membrane. It catalyses the reaction 4-aminobutanoate(in) + L-glutamate(out) = 4-aminobutanoate(out) + L-glutamate(in). Its activity is regulated as follows. Shows pH-dependent activity. The Glu/GABA transport activity is robust at pH 4.5 and rapidly decreases with increasing pH, with no detectable activity at pH 6.5 or above. The Glu analog L-trans-pyrrolidine-2,4-dicarboxylic acid (L-PDC) blocks the uptake of glutamate by selective inhibition. In terms of biological role, involved in glutaminase-dependent acid resistance. Exchanges extracellular glutamate (Glu) for intracellular gamma-aminobutyric acid (GABA) under acidic conditions. The protonation states of substrates are crucial for transport. Selectively transports Glu with no net charge and GABA with a positive charge. Also efficiently transports glutamine and, to a smaller extent, methionine and leucine. When the extracellular pH drops below 2.5, can import L-glutamine and export either glutamate or GABA. The ability to survive the extremely acidic conditions of the stomach is essential for successful colonization of the host by commensal and pathogenic bacteria. This is Glutamate/gamma-aminobutyrate antiporter from Escherichia coli (strain K12).